The following is a 163-amino-acid chain: uncharacterized protein (163 aa).

4Fe-4S ferredoxin-type domains follow at residues Arg-30–Asp-59, Leu-61–Leu-90, Lys-105–Ser-136, and Ser-136–Arg-163. [4Fe-4S] cluster contacts are provided by Cys-39, Cys-42, Cys-45, Cys-49, Cys-70, Cys-73, Cys-76, Cys-80, Cys-116, Cys-119, Cys-122, Cys-126, Cys-145, Cys-148, Cys-151, and Cys-155.

This is an uncharacterized protein from Methanocaldococcus jannaschii (strain ATCC 43067 / DSM 2661 / JAL-1 / JCM 10045 / NBRC 100440) (Methanococcus jannaschii).